We begin with the raw amino-acid sequence, 400 residues long: Argininosuccinate synthase (400 aa).

Ala-8–Ser-16 provides a ligand contact to ATP. L-citrulline is bound at residue Tyr-85. Position 115 (Gly-115) interacts with ATP. Positions 117, 121, and 122 each coordinate L-aspartate. Asn-121 serves as a coordination point for L-citrulline. Residues Arg-125, Ser-173, Glu-258, and Tyr-270 each contribute to the L-citrulline site.

It belongs to the argininosuccinate synthase family. Type 1 subfamily. Homotetramer.

It is found in the cytoplasm. The enzyme catalyses L-citrulline + L-aspartate + ATP = 2-(N(omega)-L-arginino)succinate + AMP + diphosphate + H(+). The protein operates within amino-acid biosynthesis; L-arginine biosynthesis; L-arginine from L-ornithine and carbamoyl phosphate: step 2/3. This chain is Argininosuccinate synthase, found in Staphylococcus haemolyticus (strain JCSC1435).